Consider the following 67-residue polypeptide: Conotoxin mr3d (67 aa).

An N-terminal signal peptide occupies residues 1-19; the sequence is MSKLGILLTICLLLFPLTA. Positions 20–52 are excised as a propeptide; it reads VPLDGDQPADRPAERMQDDISSEHHPFFDPVKR. Disulfide bonds link Cys53/Cys65, Cys54/Cys62, and Cys58/Cys66. Pro64 carries the 4-hydroxyproline; partial modification. Cys66 carries the cysteine amide; partial modification.

The protein belongs to the conotoxin M superfamily. Has been found to be hydroxylated and amidated by Han et al. (2006), and to be unmodified by Ju et al. (2022). In terms of tissue distribution, expressed by the venom duct.

It localises to the secreted. The chain is Conotoxin mr3d from Conus marmoreus (Marble cone).